Here is a 22-residue protein sequence, read N- to C-terminus: 65 kDa membrane protein (22 aa).

Residues 1–22 (AAKPLDKSSSSLHHGYSKVHVP) form a disordered region.

It is found in the cell membrane. Its function is as follows. Binds various plasma and ECM-proteins. This is 65 kDa membrane protein from Staphylococcus aureus.